Here is a 1325-residue protein sequence, read N- to C-terminus: RIMS-binding protein 2 (1325 aa).

The interval 153–181 (TFLSKSRSDTPRCRFDSDMDNDQNSNTSK) is disordered. The segment covering 158-169 (SRSDTPRCRFDS) has biased composition (basic and acidic residues). The SH3 1 domain maps to 186–253 (GKVHLCIARY…PSNFVDFVQD (68 aa)). 3 Fibronectin type-III domains span residues 315 to 408 (VPYP…GKDV), 411 to 493 (APSN…KKEA), and 507 to 608 (PPQD…VPPS). 3 disordered regions span residues 601 to 778 (SDLL…GSDL), 988 to 1010 (DLGS…KKYE), and 1040 to 1090 (AAGP…SRPM). The span at 627–641 (ETKEEHLGPHLKIDE) shows a compositional bias: basic and acidic residues. Residues 664-676 (FPSSLQGRRSPSP) are compositionally biased toward polar residues. Over residues 696-716 (MAREAAQRVAESNRMERRSVF) the composition is skewed to basic and acidic residues. A compositionally biased stretch (polar residues) spans 717 to 727 (SERSNAAQYAN). 2 stretches are compositionally biased toward basic and acidic residues: residues 763 to 774 (CHGEDYHTESSR) and 996 to 1010 (PRSE…KKYE). 2 SH3 domains span residues 1121-1189 (ISTR…EIQA) and 1225-1292 (VSTR…EVPD).

The protein belongs to the RIMBP family. In terms of assembly, interacts with RIMS1, RIMS2, CACNA1D and CACNA1B, and potentially with other Ca(2+) channel alpha-1 isoforms. As to expression, brain, cochlea and retina.

It is found in the cell membrane. The protein resides in the synapse. Its function is as follows. Plays a role in the synaptic transmission as bifunctional linker that interacts simultaneously with RIMS1, RIMS2, CACNA1D and CACNA1B. This Gallus gallus (Chicken) protein is RIMS-binding protein 2 (RIMBP2).